A 203-amino-acid chain; its full sequence is Transcriptional regulator GfcR 2 (203 aa).

The protein belongs to the purine/pyrimidine phosphoribosyltransferase family. GfcR subfamily.

The protein is Transcriptional regulator GfcR 2 of Methanosarcina acetivorans (strain ATCC 35395 / DSM 2834 / JCM 12185 / C2A).